We begin with the raw amino-acid sequence, 564 residues long: Dihydroxy-acid dehydratase (564 aa).

Asp80 is a Mg(2+) binding site. Residue Cys121 participates in [2Fe-2S] cluster binding. Positions 122 and 123 each coordinate Mg(2+). The residue at position 123 (Lys123) is an N6-carboxylysine. Cys194 lines the [2Fe-2S] cluster pocket. Glu447 lines the Mg(2+) pocket. Ser473 functions as the Proton acceptor in the catalytic mechanism.

The protein belongs to the IlvD/Edd family. Homodimer. [2Fe-2S] cluster serves as cofactor. Requires Mg(2+) as cofactor.

The enzyme catalyses (2R)-2,3-dihydroxy-3-methylbutanoate = 3-methyl-2-oxobutanoate + H2O. It carries out the reaction (2R,3R)-2,3-dihydroxy-3-methylpentanoate = (S)-3-methyl-2-oxopentanoate + H2O. It participates in amino-acid biosynthesis; L-isoleucine biosynthesis; L-isoleucine from 2-oxobutanoate: step 3/4. It functions in the pathway amino-acid biosynthesis; L-valine biosynthesis; L-valine from pyruvate: step 3/4. Its function is as follows. Functions in the biosynthesis of branched-chain amino acids. Catalyzes the dehydration of (2R,3R)-2,3-dihydroxy-3-methylpentanoate (2,3-dihydroxy-3-methylvalerate) into 2-oxo-3-methylpentanoate (2-oxo-3-methylvalerate) and of (2R)-2,3-dihydroxy-3-methylbutanoate (2,3-dihydroxyisovalerate) into 2-oxo-3-methylbutanoate (2-oxoisovalerate), the penultimate precursor to L-isoleucine and L-valine, respectively. The protein is Dihydroxy-acid dehydratase of Listeria monocytogenes serotype 4a (strain HCC23).